Consider the following 208-residue polypeptide: Small ribosomal subunit protein uS4 (208 aa).

An S4 RNA-binding domain is found at 98–161; that stretch reads QRLDNLVYRM…KNNPQILRAV (64 aa).

The protein belongs to the universal ribosomal protein uS4 family. Part of the 30S ribosomal subunit. Contacts protein S5. The interaction surface between S4 and S5 is involved in control of translational fidelity.

Its function is as follows. One of the primary rRNA binding proteins, it binds directly to 16S rRNA where it nucleates assembly of the body of the 30S subunit. In terms of biological role, with S5 and S12 plays an important role in translational accuracy. The chain is Small ribosomal subunit protein uS4 from Campylobacter hominis (strain ATCC BAA-381 / DSM 21671 / CCUG 45161 / LMG 19568 / NCTC 13146 / CH001A).